The primary structure comprises 389 residues: GDSL esterase/lipase At1g28570 (389 aa).

Residues 1–25 (MATLFMKLVSFFLILSTFCLTTVNS) form the signal peptide. The Nucleophile role is filled by Ser41. N-linked (GlcNAc...) asparagine glycosylation is found at Asn137 and Asn319. Residues Asp344 and His347 contribute to the active site.

It belongs to the 'GDSL' lipolytic enzyme family.

The protein resides in the secreted. The chain is GDSL esterase/lipase At1g28570 from Arabidopsis thaliana (Mouse-ear cress).